Here is a 479-residue protein sequence, read N- to C-terminus: Ribosomal RNA small subunit methyltransferase F (479 aa).

S-adenosyl-L-methionine is bound by residues 125 to 131, glutamate 149, aspartate 176, and aspartate 194; that span reads AAAPGSK. Catalysis depends on cysteine 247, which acts as the Nucleophile.

This sequence belongs to the class I-like SAM-binding methyltransferase superfamily. RsmB/NOP family.

Its subcellular location is the cytoplasm. The catalysed reaction is cytidine(1407) in 16S rRNA + S-adenosyl-L-methionine = 5-methylcytidine(1407) in 16S rRNA + S-adenosyl-L-homocysteine + H(+). Functionally, specifically methylates the cytosine at position 1407 (m5C1407) of 16S rRNA. The protein is Ribosomal RNA small subunit methyltransferase F of Salmonella paratyphi A (strain ATCC 9150 / SARB42).